A 397-amino-acid polypeptide reads, in one-letter code: Dual-specificity RNA methyltransferase RlmN (397 aa).

The active-site Proton acceptor is glutamate 130. The 240-residue stretch at 138–377 folds into the Radical SAM core domain; sequence VEDRGAVCIS…ASPIRTPRGR (240 aa). A disulfide bridge connects residues cysteine 145 and cysteine 383. Residues cysteine 152, cysteine 156, and cysteine 159 each contribute to the [4Fe-4S] cluster site. Residues 209 to 210, serine 241, 263 to 265, and asparagine 340 each bind S-adenosyl-L-methionine; these read GE and SLH. The active-site S-methylcysteine intermediate is cysteine 383.

Belongs to the radical SAM superfamily. RlmN family. It depends on [4Fe-4S] cluster as a cofactor.

The protein resides in the cytoplasm. The catalysed reaction is adenosine(2503) in 23S rRNA + 2 reduced [2Fe-2S]-[ferredoxin] + 2 S-adenosyl-L-methionine = 2-methyladenosine(2503) in 23S rRNA + 5'-deoxyadenosine + L-methionine + 2 oxidized [2Fe-2S]-[ferredoxin] + S-adenosyl-L-homocysteine. It carries out the reaction adenosine(37) in tRNA + 2 reduced [2Fe-2S]-[ferredoxin] + 2 S-adenosyl-L-methionine = 2-methyladenosine(37) in tRNA + 5'-deoxyadenosine + L-methionine + 2 oxidized [2Fe-2S]-[ferredoxin] + S-adenosyl-L-homocysteine. Its function is as follows. Specifically methylates position 2 of adenine 2503 in 23S rRNA and position 2 of adenine 37 in tRNAs. m2A2503 modification seems to play a crucial role in the proofreading step occurring at the peptidyl transferase center and thus would serve to optimize ribosomal fidelity. This is Dual-specificity RNA methyltransferase RlmN from Granulibacter bethesdensis (strain ATCC BAA-1260 / CGDNIH1).